The sequence spans 456 residues: 26S proteasome non-ATPase regulatory subunit 12 (456 aa).

Ala2 carries the post-translational modification N-acetylalanine. Lys92 is covalently cross-linked (Glycyl lysine isopeptide (Lys-Gly) (interchain with G-Cter in SUMO1); alternate). Lys92 participates in a covalent cross-link: Glycyl lysine isopeptide (Lys-Gly) (interchain with G-Cter in SUMO2); alternate. N6-acetyllysine occurs at positions 221 and 368. The 179-residue stretch at Ser242–Asp420 folds into the PCI domain.

It belongs to the proteasome subunit p55 family. Component of the 19S proteasome regulatory particle complex. The 26S proteasome consists of a 20S core particle (CP) and two 19S regulatory subunits (RP). The regulatory particle is made of a lid composed of 9 subunits including PSMD12, a base containing 6 ATPases and few additional components. Interacts with ERCC6.

Its function is as follows. Component of the 26S proteasome, a multiprotein complex involved in the ATP-dependent degradation of ubiquitinated proteins. This complex plays a key role in the maintenance of protein homeostasis by removing misfolded or damaged proteins, which could impair cellular functions, and by removing proteins whose functions are no longer required. Therefore, the proteasome participates in numerous cellular processes, including cell cycle progression, apoptosis, or DNA damage repair. The polypeptide is 26S proteasome non-ATPase regulatory subunit 12 (PSMD12) (Bos taurus (Bovine)).